We begin with the raw amino-acid sequence, 279 residues long: 2-dehydropantoate 2-reductase (279 aa).

Residues 6–11 (GLGAVG), lysine 66, and asparagine 86 each bind NADP(+). The active-site Proton donor is the lysine 158. Residues lysine 158, asparagine 162, asparagine 166, asparagine 176, and 225-228 (NLSS) contribute to the substrate site. Glutamate 240 is an NADP(+) binding site.

This sequence belongs to the ketopantoate reductase family.

It is found in the cytoplasm. The enzyme catalyses (R)-pantoate + NAD(+) = 2-dehydropantoate + NADH + H(+). The catalysed reaction is (R)-pantoate + NADP(+) = 2-dehydropantoate + NADPH + H(+). Its pathway is cofactor biosynthesis; coenzyme A biosynthesis. In terms of biological role, catalyzes the NAD(P)H-dependent reduction of ketopantoate into pantoic acid. The polypeptide is 2-dehydropantoate 2-reductase (Pyrobaculum aerophilum (strain ATCC 51768 / DSM 7523 / JCM 9630 / CIP 104966 / NBRC 100827 / IM2)).